The primary structure comprises 334 residues: Formamidase (334 aa).

The CN hydrolase domain maps to 14–260 (FLVAAIQFPV…WEIVTGEIYP (247 aa)). Residue E60 is the Proton acceptor of the active site. The active-site Proton donor is the K133. The active-site Nucleophile is C166.

It belongs to the carbon-nitrogen hydrolase superfamily. Aliphatic amidase family.

It carries out the reaction formamide + H2O = formate + NH4(+). Is an aliphatic amidase with a restricted substrate specificity, as it only hydrolyzes formamide. This chain is Formamidase, found in Helicobacter pylori (strain J99 / ATCC 700824) (Campylobacter pylori J99).